The chain runs to 320 residues: Ferrochelatase (320 aa).

2 residues coordinate Fe cation: His-194 and Glu-275.

It belongs to the ferrochelatase family. Monomer.

It localises to the cytoplasm. The enzyme catalyses heme b + 2 H(+) = protoporphyrin IX + Fe(2+). Its pathway is porphyrin-containing compound metabolism; protoheme biosynthesis; protoheme from protoporphyrin-IX: step 1/1. Catalyzes the ferrous insertion into protoporphyrin IX. The chain is Ferrochelatase from Escherichia coli O127:H6 (strain E2348/69 / EPEC).